We begin with the raw amino-acid sequence, 181 residues long: Alkyl hydroperoxide reductase AhpD (181 aa).

Cysteine 131 acts as the Proton donor in catalysis. A disulfide bridge connects residues cysteine 131 and cysteine 134. Catalysis depends on cysteine 134, which acts as the Cysteine sulfenic acid (-SOH) intermediate.

Belongs to the AhpD family.

The enzyme catalyses N(6)-[(R)-dihydrolipoyl]-L-lysyl-[lipoyl-carrier protein] + a hydroperoxide = N(6)-[(R)-lipoyl]-L-lysyl-[lipoyl-carrier protein] + an alcohol + H2O. Functionally, antioxidant protein with alkyl hydroperoxidase activity. Required for the reduction of the AhpC active site cysteine residues and for the regeneration of the AhpC enzyme activity. This Rhodopseudomonas palustris (strain BisB18) protein is Alkyl hydroperoxide reductase AhpD.